The following is a 191-amino-acid chain: Probable GTP-binding protein EngB (191 aa).

Residues 13–189 (DRLEVAFAGR…RAEIVALLPD (177 aa)) enclose the EngB-type G domain. GTP is bound by residues 21-28 (GRSNVGKS), 48-52 (GRTRE), 67-70 (DLPG), 134-137 (TKTD), and 168-170 (TSS). Mg(2+)-binding residues include Ser-28 and Thr-50.

This sequence belongs to the TRAFAC class TrmE-Era-EngA-EngB-Septin-like GTPase superfamily. EngB GTPase family. Mg(2+) serves as cofactor.

In terms of biological role, necessary for normal cell division and for the maintenance of normal septation. The sequence is that of Probable GTP-binding protein EngB from Maricaulis maris (strain MCS10) (Caulobacter maris).